Reading from the N-terminus, the 460-residue chain is Bifunctional protein GlmU (460 aa).

The pyrophosphorylase stretch occupies residues 1–232; it reads MALNVVILAA…AIEVEGANNR (232 aa). UDP-N-acetyl-alpha-D-glucosamine contacts are provided by residues 8–11, K22, Q73, 78–79, 100–102, G137, E157, N172, and N230; these read LAAG, GT, and YGD. A Mg(2+)-binding site is contributed by D102. Residue N230 coordinates Mg(2+). The linker stretch occupies residues 233–253; sequence VQLAQLERAYQAREAEKLMLA. Positions 254-460 are N-acetyltransferase; it reads GANLRDPSRI…GWQRPVKIKK (207 aa). The UDP-N-acetyl-alpha-D-glucosamine site is built by R336 and K354. H366 functions as the Proton acceptor in the catalytic mechanism. UDP-N-acetyl-alpha-D-glucosamine is bound by residues Y369 and N380. Acetyl-CoA is bound by residues A383, 389-390, S408, A426, and R443; that span reads NY.

It in the N-terminal section; belongs to the N-acetylglucosamine-1-phosphate uridyltransferase family. In the C-terminal section; belongs to the transferase hexapeptide repeat family. Homotrimer. Mg(2+) is required as a cofactor.

The protein localises to the cytoplasm. It carries out the reaction alpha-D-glucosamine 1-phosphate + acetyl-CoA = N-acetyl-alpha-D-glucosamine 1-phosphate + CoA + H(+). The catalysed reaction is N-acetyl-alpha-D-glucosamine 1-phosphate + UTP + H(+) = UDP-N-acetyl-alpha-D-glucosamine + diphosphate. Its pathway is nucleotide-sugar biosynthesis; UDP-N-acetyl-alpha-D-glucosamine biosynthesis; N-acetyl-alpha-D-glucosamine 1-phosphate from alpha-D-glucosamine 6-phosphate (route II): step 2/2. It participates in nucleotide-sugar biosynthesis; UDP-N-acetyl-alpha-D-glucosamine biosynthesis; UDP-N-acetyl-alpha-D-glucosamine from N-acetyl-alpha-D-glucosamine 1-phosphate: step 1/1. It functions in the pathway bacterial outer membrane biogenesis; LPS lipid A biosynthesis. Functionally, catalyzes the last two sequential reactions in the de novo biosynthetic pathway for UDP-N-acetylglucosamine (UDP-GlcNAc). The C-terminal domain catalyzes the transfer of acetyl group from acetyl coenzyme A to glucosamine-1-phosphate (GlcN-1-P) to produce N-acetylglucosamine-1-phosphate (GlcNAc-1-P), which is converted into UDP-GlcNAc by the transfer of uridine 5-monophosphate (from uridine 5-triphosphate), a reaction catalyzed by the N-terminal domain. In Shewanella baltica (strain OS195), this protein is Bifunctional protein GlmU.